Consider the following 308-residue polypeptide: Spermidine synthase 1 (308 aa).

One can recognise a PABS domain in the interval 17 to 254; it reads PGWFSEISPL…GVIGFMLCST (238 aa). Gln-48 is a binding site for S-adenosyl 3-(methylsulfanyl)propylamine. Putrescine is bound at residue Tyr-78. S-adenosyl 3-(methylsulfanyl)propylamine-binding positions include Gln-79, Asp-103, Glu-123, 154 to 155, and Asp-173; that span reads DG. Asp-173 functions as the Proton acceptor in the catalytic mechanism. Residues 173–176 and Tyr-242 each bind putrescine; that span reads DSSD.

It belongs to the spermidine/spermine synthase family.

It carries out the reaction S-adenosyl 3-(methylsulfanyl)propylamine + putrescine = S-methyl-5'-thioadenosine + spermidine + H(+). Its pathway is amine and polyamine biosynthesis; spermidine biosynthesis; spermidine from putrescine: step 1/1. The polypeptide is Spermidine synthase 1 (Datura stramonium (Jimsonweed)).